We begin with the raw amino-acid sequence, 277 residues long: 3-methyl-2-oxobutanoate hydroxymethyltransferase (277 aa).

2 residues coordinate Mg(2+): Asp-43 and Asp-82. 3-methyl-2-oxobutanoate contacts are provided by residues 43–44, Asp-82, and Lys-112; that span reads DS. Residue Glu-114 coordinates Mg(2+). Catalysis depends on Glu-181, which acts as the Proton acceptor.

This sequence belongs to the PanB family. Homodecamer; pentamer of dimers. Mg(2+) is required as a cofactor.

The protein resides in the cytoplasm. It catalyses the reaction 3-methyl-2-oxobutanoate + (6R)-5,10-methylene-5,6,7,8-tetrahydrofolate + H2O = 2-dehydropantoate + (6S)-5,6,7,8-tetrahydrofolate. It participates in cofactor biosynthesis; (R)-pantothenate biosynthesis; (R)-pantoate from 3-methyl-2-oxobutanoate: step 1/2. Functionally, catalyzes the reversible reaction in which hydroxymethyl group from 5,10-methylenetetrahydrofolate is transferred onto alpha-ketoisovalerate to form ketopantoate. The sequence is that of 3-methyl-2-oxobutanoate hydroxymethyltransferase from Listeria monocytogenes serotype 4a (strain HCC23).